The sequence spans 289 residues: Rhodopsin (289 aa).

Residues 1–7 (YLVSPAA) are Extracellular-facing. A helical transmembrane segment spans residues 8 to 32 (YAALGAYMFLLILIGFPVNFLTLYV). Residues 33–44 (TLEHKKLRTPLN) lie on the Cytoplasmic side of the membrane. A helical membrane pass occupies residues 45-67 (YILLNLAVADLFMVLGGFTTTMY). At 68-81 (TSMHGYFVLGRLGC) the chain is on the extracellular side. Cysteines 81 and 158 form a disulfide. A helical membrane pass occupies residues 82–104 (NLEGFFATLGGEIALWSLVVLAI). Residues 105–107 (ERW) carry the 'Ionic lock' involved in activated form stabilization motif. Residues 105 to 123 (ERWIVVCKPISKFRFTEDN) are Cytoplasmic-facing. Residues 124 to 144 (AIMGLAFSWVMALACAVPPLV) form a helical membrane-spanning segment. Residues 145-173 (GWLRYIPEGMQCTCGVDYYTRAEGFDNES) are Extracellular-facing. A glycan (N-linked (GlcNAc...) asparagine) is linked at Asn-171. The helical transmembrane segment at 174 to 195 (FVIYMFIVHFLIPLSVIFFCYG) threads the bilayer. The Cytoplasmic portion of the chain corresponds to 196–223 (RLLCAVKEAAAAQQESETTQRAEKEVSR). A helical transmembrane segment spans residues 224–245 (MVVIMVIGFLVCWLPYASVAWW). Residues 246 to 257 (IFCNQGSDFGPI) are Extracellular-facing. The chain crosses the membrane as a helical span at residues 258–279 (FMTLPSFFAKRPAIYNPMIYIC). At Lys-267 the chain carries N6-(retinylidene)lysine. Residues 280–289 (MNKQFRHCMI) lie on the Cytoplasmic side of the membrane.

It belongs to the G-protein coupled receptor 1 family. Opsin subfamily. In terms of processing, phosphorylated on some or all of the serine and threonine residues present in the C-terminal region. Contains one covalently linked retinal chromophore.

The protein resides in the membrane. It localises to the cell projection. It is found in the cilium. Its subcellular location is the photoreceptor outer segment. Photoreceptor required for image-forming vision at low light intensity. While most salt water fish species use retinal as chromophore, most freshwater fish use 3-dehydroretinal, or a mixture of retinal and 3-dehydroretinal. Light-induced isomerization of 11-cis to all-trans retinal triggers a conformational change that activates signaling via G-proteins. Subsequent receptor phosphorylation mediates displacement of the bound G-protein alpha subunit by arrestin and terminates signaling. The sequence is that of Rhodopsin (rho) from Batrachocottus nikolskii (Fat sculpin).